Consider the following 396-residue polypeptide: MTKTIAINAGSSSLKWQLYLMPEEKVLAKGLIERIGLKDSISTVKFDGRSEQQILDIENHTQAVKILLDDLIRFDIIKAYDEITGVGHRVVAGGEYFKESTVVEGDVLEKVEELSLLAPLHNPANAAGVRAFKELLPDITSVVVFDTSFHTSMPEKAYRYPLPTKYYTENKVRKYGAHGTSHQFVAGEAAKLLGRPLEDLKLITCHIGNGGSITAVKAGKSVDTSMGFTPLGGIMMGTRTGDIDPAIIPYLMQYTEDFNTPEDISRVLNRESGLLGVSANSSDMRDIEAAVAEWNHEASLAYEMYVDRIQKHIGQYFAVLNGADAIVFTAGVGENAENFRRDVISGISWFGCDVDDEKNVFGVTGDISTEAAKIRVLVIPTDEELVIARDVERLKK.

N8 contributes to the Mg(2+) binding site. K15 is a binding site for ATP. R89 is a binding site for substrate. Catalysis depends on D146, which acts as the Proton donor/acceptor. ATP is bound by residues 206 to 210 (HIGNG), 283 to 285 (DMR), and 331 to 335 (GVGEN). E383 is a Mg(2+) binding site.

Belongs to the acetokinase family. In terms of assembly, homodimer. Mg(2+) serves as cofactor. It depends on Mn(2+) as a cofactor.

It is found in the cytoplasm. The enzyme catalyses acetate + ATP = acetyl phosphate + ADP. The protein operates within metabolic intermediate biosynthesis; acetyl-CoA biosynthesis; acetyl-CoA from acetate: step 1/2. Its function is as follows. Catalyzes the formation of acetyl phosphate from acetate and ATP. Can also catalyze the reverse reaction. The protein is Acetate kinase of Streptococcus pneumoniae (strain JJA).